The sequence spans 497 residues: Glycerol kinase (497 aa).

T11 lines the ADP pocket. ATP contacts are provided by T11, T12, and S13. Position 11 (T11) interacts with sn-glycerol 3-phosphate. An ADP-binding site is contributed by R15. 4 residues coordinate sn-glycerol 3-phosphate: R81, E82, Y134, and D244. R81, E82, Y134, D244, and Q245 together coordinate glycerol. T266 and G309 together coordinate ADP. ATP-binding residues include T266, G309, Q313, and G410. Residues G410 and N414 each contribute to the ADP site.

Belongs to the FGGY kinase family.

The enzyme catalyses glycerol + ATP = sn-glycerol 3-phosphate + ADP + H(+). Its pathway is polyol metabolism; glycerol degradation via glycerol kinase pathway; sn-glycerol 3-phosphate from glycerol: step 1/1. Inhibited by fructose 1,6-bisphosphate (FBP). Its function is as follows. Key enzyme in the regulation of glycerol uptake and metabolism. Catalyzes the phosphorylation of glycerol to yield sn-glycerol 3-phosphate. This is Glycerol kinase from Fusobacterium nucleatum subsp. nucleatum (strain ATCC 25586 / DSM 15643 / BCRC 10681 / CIP 101130 / JCM 8532 / KCTC 2640 / LMG 13131 / VPI 4355).